Here is a 69-residue protein sequence, read N- to C-terminus: AREGYLVSKSTGCKYECFWLGKNEGCDKECKAPNQGGGYGYCHAFACWCENLPESTPTYPIPGKSCGKK.

A signal peptide is located at residue Ala-1. The LCN-type CS-alpha/beta domain maps to Arg-2–Gly-67. 4 disulfide bridges follow: Cys-13/Cys-66, Cys-17/Cys-42, Cys-26/Cys-47, and Cys-30/Cys-49. Cys-66 is subject to Cysteine amide. A propeptide spanning residues Gly-67–Lys-69 is cleaved from the precursor.

This sequence belongs to the long (4 C-C) scorpion toxin superfamily. Sodium channel inhibitor family. Beta subfamily. Expressed by the venom gland.

Its subcellular location is the secreted. Beta toxins bind voltage-independently at site-4 of sodium channels (Nav) and shift the voltage of activation toward more negative potentials thereby affecting sodium channel activation and promoting spontaneous and repetitive firing. The sequence is that of Neurotoxin Cex7 from Centruroides exilicauda (Bark scorpion).